Reading from the N-terminus, the 966-residue chain is Leucine--tRNA ligase (966 aa).

A 'HIGH' region motif is present at residues 41–51 (PYLNGNLHAGH). Positions 632–636 (KMSKS) match the 'KMSKS' region motif. Lys635 serves as a coordination point for ATP.

This sequence belongs to the class-I aminoacyl-tRNA synthetase family.

It localises to the cytoplasm. The catalysed reaction is tRNA(Leu) + L-leucine + ATP = L-leucyl-tRNA(Leu) + AMP + diphosphate. The polypeptide is Leucine--tRNA ligase (Methanosarcina mazei (strain ATCC BAA-159 / DSM 3647 / Goe1 / Go1 / JCM 11833 / OCM 88) (Methanosarcina frisia)).